We begin with the raw amino-acid sequence, 503 residues long: Cytochrome P450 3A12 (503 aa).

C442 contributes to the heme binding site.

This sequence belongs to the cytochrome P450 family. Heme serves as cofactor.

The protein localises to the endoplasmic reticulum membrane. It localises to the microsome membrane. It catalyses the reaction an organic molecule + reduced [NADPH--hemoprotein reductase] + O2 = an alcohol + oxidized [NADPH--hemoprotein reductase] + H2O + H(+). Cytochromes P450 are a group of heme-thiolate monooxygenases. In liver microsomes, this enzyme is involved in an NADPH-dependent electron transport pathway. It oxidizes a variety of structurally unrelated compounds, including steroids, fatty acids, and xenobiotics. This is Cytochrome P450 3A12 (CYP3A12) from Canis lupus familiaris (Dog).